Consider the following 640-residue polypeptide: Threonine--tRNA ligase (640 aa).

The TGS domain maps to methionine 1–threonine 61. Residues aspartate 242–proline 533 are catalytic. Zn(2+) contacts are provided by cysteine 333, histidine 384, and histidine 510.

Belongs to the class-II aminoacyl-tRNA synthetase family. Homodimer. Zn(2+) is required as a cofactor.

The protein resides in the cytoplasm. The enzyme catalyses tRNA(Thr) + L-threonine + ATP = L-threonyl-tRNA(Thr) + AMP + diphosphate + H(+). Its function is as follows. Catalyzes the attachment of threonine to tRNA(Thr) in a two-step reaction: L-threonine is first activated by ATP to form Thr-AMP and then transferred to the acceptor end of tRNA(Thr). Also edits incorrectly charged L-seryl-tRNA(Thr). The protein is Threonine--tRNA ligase of Pseudomonas syringae pv. tomato (strain ATCC BAA-871 / DC3000).